The sequence spans 396 residues: Ribosomal RNA large subunit methyltransferase I (396 aa).

The PUA domain occupies 2-81 (SVRLVLAKGR…ETIDIAFFTR (80 aa)).

The protein belongs to the methyltransferase superfamily. RlmI family.

It is found in the cytoplasm. The catalysed reaction is cytidine(1962) in 23S rRNA + S-adenosyl-L-methionine = 5-methylcytidine(1962) in 23S rRNA + S-adenosyl-L-homocysteine + H(+). In terms of biological role, specifically methylates the cytosine at position 1962 (m5C1962) of 23S rRNA. The protein is Ribosomal RNA large subunit methyltransferase I of Cronobacter sakazakii (strain ATCC BAA-894) (Enterobacter sakazakii).